A 434-amino-acid chain; its full sequence is Trigger factor (434 aa).

One can recognise a PPIase FKBP-type domain in the interval 161 to 246 (EDRVTIDFTG…LKKVEERELP (86 aa)).

The protein belongs to the FKBP-type PPIase family. Tig subfamily.

The protein localises to the cytoplasm. It carries out the reaction [protein]-peptidylproline (omega=180) = [protein]-peptidylproline (omega=0). Its function is as follows. Involved in protein export. Acts as a chaperone by maintaining the newly synthesized protein in an open conformation. Functions as a peptidyl-prolyl cis-trans isomerase. This chain is Trigger factor, found in Pectobacterium carotovorum subsp. carotovorum (strain PC1).